A 184-amino-acid polypeptide reads, in one-letter code: CASP-like protein 1U2 (184 aa).

The Cytoplasmic segment spans residues 1 to 16 (MSYGCQVSDDEPNGSK). Residues 17 to 37 (AVSLLLRLSTLALALTSAVVM) traverse the membrane as a helical segment. The Extracellular portion of the chain corresponds to 38 to 62 (ATASECTVVQLNGVVATITYKDFPP). The helical transmembrane segment at 63–83 (FVYLVGFNIAAAMLEAAAIYL) threads the bilayer. At 84–100 (RLSTGGGDDDDEGFKGK) the chain is on the cytoplasmic side. The chain crosses the membrane as a helical span at residues 101 to 121 (LPGILLVVIDVAVQALVYTAT). The Extracellular segment spans residues 122-153 (GGAFAAVSAYGPQINACGAGAGRFCGQVHQSK). Residues 154 to 174 (LLSFAGSAAVGLAVVFRDVSL) form a helical membrane-spanning segment. Residues 175–184 (PFSLWPTSSD) are Cytoplasmic-facing.

The protein belongs to the Casparian strip membrane proteins (CASP) family. Homodimer and heterodimers.

The protein localises to the cell membrane. The protein is CASP-like protein 1U2 of Oryza sativa subsp. japonica (Rice).